Reading from the N-terminus, the 296-residue chain is Protoheme IX farnesyltransferase (296 aa).

9 consecutive transmembrane segments (helical) span residues 9-29, 36-56, 75-95, 99-119, 133-153, 163-183, 209-229, 234-254, and 265-285; these read VTKP…FLLA, YPLF…GCVF, VLVK…VLGI, LLLY…GFVI, VYGT…GYCA, LILL…IAIF, ITLY…SGYA, LVVA…GYKA, and FVFS…DFNV.

Belongs to the UbiA prenyltransferase family. Protoheme IX farnesyltransferase subfamily.

It localises to the cell inner membrane. It carries out the reaction heme b + (2E,6E)-farnesyl diphosphate + H2O = Fe(II)-heme o + diphosphate. The protein operates within porphyrin-containing compound metabolism; heme O biosynthesis; heme O from protoheme: step 1/1. In terms of biological role, converts heme B (protoheme IX) to heme O by substitution of the vinyl group on carbon 2 of heme B porphyrin ring with a hydroxyethyl farnesyl side group. The protein is Protoheme IX farnesyltransferase of Yersinia pestis bv. Antiqua (strain Antiqua).